The primary structure comprises 640 residues: Zinc finger and BTB domain-containing protein 22 (640 aa).

The 65-residue stretch at 57-121 (CDVSIRVQGR…AYTGRLSMAA (65 aa)) folds into the BTB domain. Disordered stretches follow at residues 191–244 (RSHA…PVFP), 308–327 (PAPA…EEED), and 332–482 (CEDD…GGTG). A compositionally biased stretch (polar residues) spans 192–210 (SHASSRASENQSPSSSNYF). Residue serine 203 is modified to Phosphoserine. Positions 318–327 (PDLEEDEEED) are enriched in acidic residues. The segment covering 431 to 442 (SSSSSSSSSSSS) has biased composition (low complexity). Over residues 469–482 (GMPGGPGGTPGGTG) the composition is skewed to gly residues. The C2H2-type 1; atypical zinc-finger motif lies at 490-511 (FLCHCGKAFSHKSMRDRHVNMH). 2 C2H2-type zinc fingers span residues 517–539 (FDCP…MKTH) and 545–571 (YECG…ERRH). A disordered region spans residues 571-640 (HRLVGGGGGG…MGFGGGGGTN (70 aa)). Residues 574–588 (VGGGGGGGPGPGGPT) show a composition bias toward gly residues.

It belongs to the krueppel C2H2-type zinc-finger protein family.

The protein resides in the nucleus. May be involved in transcriptional regulation. In Canis lupus familiaris (Dog), this protein is Zinc finger and BTB domain-containing protein 22 (ZBTB22).